The following is a 164-amino-acid chain: HTH-type transcriptional regulator IscR (164 aa).

Residues 2–131 enclose the HTH rrf2-type domain; sequence RLTSKGRYAV…NNITLAELVN (130 aa). A DNA-binding region (H-T-H motif) is located at residues 28 to 51; it reads LADISERQGISLSYLEQLFSRLRK. 3 residues coordinate [2Fe-2S] cluster: Cys92, Cys98, and Cys104. A metal cation is bound by residues Cys92, Cys98, and Cys104. The interval 145–164 is disordered; the sequence is DTRRTANGRPQETINVNLRA. The span at 152–164 shows a compositional bias: polar residues; sequence GRPQETINVNLRA.

It depends on [2Fe-2S] cluster as a cofactor.

In terms of biological role, regulates the transcription of several operons and genes involved in the biogenesis of Fe-S clusters and Fe-S-containing proteins. The sequence is that of HTH-type transcriptional regulator IscR from Serratia proteamaculans (strain 568).